The following is a 328-amino-acid chain: Putative HTH-type transcriptional regulatory protein MA_3524 (328 aa).

Residues 132-190 (LKKARTDQSMSLGTLASMVGVSRRTISKYEEEGMDASIDVVLQLEDIFGVELARPIDIL) enclose the HTH cro/C1-type domain. Positions 143-162 (LGTLASMVGVSRRTISKYEE) form a DNA-binding region, H-T-H motif.

The sequence is that of Putative HTH-type transcriptional regulatory protein MA_3524 from Methanosarcina acetivorans (strain ATCC 35395 / DSM 2834 / JCM 12185 / C2A).